A 503-amino-acid polypeptide reads, in one-letter code: UDP-N-acetylmuramoyl-L-alanyl-D-glutamate--2,6-diaminopimelate ligase (503 aa).

Ser32 contributes to the UDP-N-acetyl-alpha-D-muramoyl-L-alanyl-D-glutamate binding site. 117 to 123 (GTNGKTT) serves as a coordination point for ATP. UDP-N-acetyl-alpha-D-muramoyl-L-alanyl-D-glutamate is bound by residues 159–160 (TT), Ser186, Gln192, and Arg194. Lys226 carries the post-translational modification N6-carboxylysine. Meso-2,6-diaminopimelate contacts are provided by residues Arg396, 420–423 (DNPR), Gly471, and Glu475. The Meso-diaminopimelate recognition motif signature appears at 420 to 423 (DNPR).

Belongs to the MurCDEF family. MurE subfamily. Requires Mg(2+) as cofactor. In terms of processing, carboxylation is probably crucial for Mg(2+) binding and, consequently, for the gamma-phosphate positioning of ATP.

It is found in the cytoplasm. It catalyses the reaction UDP-N-acetyl-alpha-D-muramoyl-L-alanyl-D-glutamate + meso-2,6-diaminopimelate + ATP = UDP-N-acetyl-alpha-D-muramoyl-L-alanyl-gamma-D-glutamyl-meso-2,6-diaminopimelate + ADP + phosphate + H(+). It participates in cell wall biogenesis; peptidoglycan biosynthesis. Functionally, catalyzes the addition of meso-diaminopimelic acid to the nucleotide precursor UDP-N-acetylmuramoyl-L-alanyl-D-glutamate (UMAG) in the biosynthesis of bacterial cell-wall peptidoglycan. In Prochlorococcus marinus (strain SARG / CCMP1375 / SS120), this protein is UDP-N-acetylmuramoyl-L-alanyl-D-glutamate--2,6-diaminopimelate ligase.